Consider the following 286-residue polypeptide: Beta-lactamase SHV-29 (286 aa).

The signal sequence occupies residues 1 to 21; that stretch reads MRYIRLCIISLLATLPLAVHA. Residue serine 66 is the Acyl-ester intermediate of the active site. A disulfide bond links cysteine 73 and cysteine 119. Residue glutamate 164 is the Proton acceptor of the active site. 230 to 232 lines the substrate pocket; sequence KTG.

The protein belongs to the class-A beta-lactamase family.

The catalysed reaction is a beta-lactam + H2O = a substituted beta-amino acid. The sequence is that of Beta-lactamase SHV-29 (bla) from Klebsiella pneumoniae.